Here is a 339-residue protein sequence, read N- to C-terminus: Ketol-acid reductoisomerase (NADP(+)) (339 aa).

A KARI N-terminal Rossmann domain is found at 1–182 (MRVYYDRDAD…GGGRSGIIET (182 aa)). Residues 24 to 27 (YGSQ), R48, S51, T53, and 83 to 86 (DEHQ) each bind NADP(+). H108 is a catalytic residue. G134 contributes to the NADP(+) binding site. Positions 183–328 (NFREECETDL…ARLRGMMPWI (146 aa)) constitute a KARI C-terminal knotted domain. Residues D191, E195, E227, and E231 each coordinate Mg(2+). Substrate is bound at residue S252.

Belongs to the ketol-acid reductoisomerase family. The cofactor is Mg(2+).

It catalyses the reaction (2R)-2,3-dihydroxy-3-methylbutanoate + NADP(+) = (2S)-2-acetolactate + NADPH + H(+). It carries out the reaction (2R,3R)-2,3-dihydroxy-3-methylpentanoate + NADP(+) = (S)-2-ethyl-2-hydroxy-3-oxobutanoate + NADPH + H(+). The protein operates within amino-acid biosynthesis; L-isoleucine biosynthesis; L-isoleucine from 2-oxobutanoate: step 2/4. It participates in amino-acid biosynthesis; L-valine biosynthesis; L-valine from pyruvate: step 2/4. Its function is as follows. Involved in the biosynthesis of branched-chain amino acids (BCAA). Catalyzes an alkyl-migration followed by a ketol-acid reduction of (S)-2-acetolactate (S2AL) to yield (R)-2,3-dihydroxy-isovalerate. In the isomerase reaction, S2AL is rearranged via a Mg-dependent methyl migration to produce 3-hydroxy-3-methyl-2-ketobutyrate (HMKB). In the reductase reaction, this 2-ketoacid undergoes a metal-dependent reduction by NADPH to yield (R)-2,3-dihydroxy-isovalerate. The polypeptide is Ketol-acid reductoisomerase (NADP(+)) (Caulobacter sp. (strain K31)).